A 290-amino-acid chain; its full sequence is Pyridoxal kinase PdxY (290 aa).

Ser-14 provides a ligand contact to substrate. The ATP site is built by Asp-116 and Glu-153. Asp-226 serves as a coordination point for substrate.

The protein belongs to the pyridoxine kinase family. PdxY subfamily. In terms of assembly, homodimer. It depends on Mg(2+) as a cofactor.

The enzyme catalyses pyridoxal + ATP = pyridoxal 5'-phosphate + ADP + H(+). Its pathway is cofactor metabolism; pyridoxal 5'-phosphate salvage; pyridoxal 5'-phosphate from pyridoxal: step 1/1. Pyridoxal kinase involved in the salvage pathway of pyridoxal 5'-phosphate (PLP). Catalyzes the phosphorylation of pyridoxal to PLP. This chain is Pyridoxal kinase PdxY, found in Rubrobacter xylanophilus (strain DSM 9941 / JCM 11954 / NBRC 16129 / PRD-1).